Reading from the N-terminus, the 103-residue chain is Small ribosomal subunit protein uS10 (103 aa).

This sequence belongs to the universal ribosomal protein uS10 family. As to quaternary structure, part of the 30S ribosomal subunit.

In terms of biological role, involved in the binding of tRNA to the ribosomes. This Psychrobacter sp. (strain PRwf-1) protein is Small ribosomal subunit protein uS10.